Consider the following 218-residue polypeptide: Large ribosomal subunit protein uL3 (218 aa).

It belongs to the universal ribosomal protein uL3 family. As to quaternary structure, part of the 50S ribosomal subunit. Forms a cluster with proteins L14 and L19.

One of the primary rRNA binding proteins, it binds directly near the 3'-end of the 23S rRNA, where it nucleates assembly of the 50S subunit. This chain is Large ribosomal subunit protein uL3, found in Brachyspira pilosicoli (Serpulina pilosicoli).